Here is a 123-residue protein sequence, read N- to C-terminus: Alpha-lactalbumin A (123 aa).

Residues 1–123 (KQFTKCELSQ…KLEQWLCEEL (123 aa)) form the C-type lysozyme domain. 4 disulfides stabilise this stretch: cysteine 6–cysteine 120, cysteine 28–cysteine 111, cysteine 61–cysteine 77, and cysteine 73–cysteine 91. Residues lysine 79, aspartate 82, aspartate 84, aspartate 87, and aspartate 88 each contribute to the Ca(2+) site.

This sequence belongs to the glycosyl hydrolase 22 family. Lactose synthase (LS) is a heterodimer of a catalytic component, beta1,4-galactosyltransferase (beta4Gal-T1) and a regulatory component, alpha-lactalbumin (LA). As to expression, mammary gland specific. Secreted in milk.

It is found in the secreted. Regulatory subunit of lactose synthase, changes the substrate specificity of galactosyltransferase in the mammary gland making glucose a good acceptor substrate for this enzyme. This enables LS to synthesize lactose, the major carbohydrate component of milk. In other tissues, galactosyltransferase transfers galactose onto the N-acetylglucosamine of the oligosaccharide chains in glycoproteins. The sequence is that of Alpha-lactalbumin A from Equus caballus (Horse).